A 313-amino-acid chain; its full sequence is Ribose-phosphate pyrophosphokinase (313 aa).

Residues 37-39 (DGE) and 96-97 (RQ) each bind ATP. Residues His-131 and Asp-170 each contribute to the Mg(2+) site. Lys-193 is an active-site residue. D-ribose 5-phosphate-binding positions include Arg-195, Asp-219, and 223 to 227 (DTAGT).

Belongs to the ribose-phosphate pyrophosphokinase family. Class I subfamily. In terms of assembly, homohexamer. Mg(2+) serves as cofactor.

Its subcellular location is the cytoplasm. The catalysed reaction is D-ribose 5-phosphate + ATP = 5-phospho-alpha-D-ribose 1-diphosphate + AMP + H(+). The protein operates within metabolic intermediate biosynthesis; 5-phospho-alpha-D-ribose 1-diphosphate biosynthesis; 5-phospho-alpha-D-ribose 1-diphosphate from D-ribose 5-phosphate (route I): step 1/1. In terms of biological role, involved in the biosynthesis of the central metabolite phospho-alpha-D-ribosyl-1-pyrophosphate (PRPP) via the transfer of pyrophosphoryl group from ATP to 1-hydroxyl of ribose-5-phosphate (Rib-5-P). The sequence is that of Ribose-phosphate pyrophosphokinase from Pseudomonas putida (strain ATCC 47054 / DSM 6125 / CFBP 8728 / NCIMB 11950 / KT2440).